A 245-amino-acid chain; its full sequence is METSQGWLVACVLAVTLVWTVAEDVCRAPNGKDGVAGIPGRPGRPGLKGERGEPGAAGIRTGIRGLKGDMGESGPPGKPGNVGFPGPTGPLGNSGPQGLKGVKGNPGNIRDQPRPAFSAIRQNPPTYGNVVVFDKVLTNQENPYQNRTGHFICAVPGFYYFTFQVISKWDLCLSIVSSSRGQPRNSLGFCDTNSKGLFQVLAGGTVLQLQRGDEVWIEKDPAKGRIYQGTEADSIFSGFLIFPSA.

The signal sequence occupies residues 1–22 (METSQGWLVACVLAVTLVWTVA). One can recognise a Collagen-like domain in the interval 31–109 (GKDGVAGIPG…KGVKGNPGNI (79 aa)). A disordered region spans residues 35-111 (VAGIPGRPGR…VKGNPGNIRD (77 aa)). A 4-hydroxyproline mark is found at Pro-39 and Pro-45. Lys-48 is subject to 5-hydroxylysine. An O-linked (Gal...) hydroxylysine glycan is attached at Lys-48. The residue at position 54 (Pro-54) is a 4-hydroxyproline. 5-hydroxylysine is present on Lys-67. Lys-67 carries an O-linked (Gal...) hydroxylysine glycan. 2 positions are modified to 4-hydroxyproline: Pro-79 and Pro-85. Lys-100 carries the post-translational modification 5-hydroxylysine. Lys-100 carries an O-linked (Gal...) hydroxylysine glycan. The region spanning 110–245 (RDQPRPAFSA…FSGFLIFPSA (136 aa)) is the C1q domain. A glycan (N-linked (GlcNAc...) asparagine) is linked at Asn-146. The cysteines at positions 172 and 190 are disulfide-linked. Gln-199 contacts Ca(2+).

In terms of assembly, core component of the complement C1 complex, a calcium-dependent complex composed of 1 molecule of the C1Q subcomplex, 2 molecules of C1R and 2 molecules of C1S. The C1Q subcomplex is composed 18 subunits: 3 chains of C1QA, C1QB, and C1QC trimerize to form 6 collagen-like triple helices connected to six globular ligand-recognition modules (C1q domain). Interacts with CR1 (via Sushi 24 and Sushi 25 domains). Interacts (via C-terminus) with CD33; this interaction activates CD33 inhibitory motifs. Post-translationally, O-linked glycans are assumed to be the Glc-Gal disaccharides typically found as secondary modifications of hydroxylated lysines in collagen-like domains.

The protein resides in the secreted. It is found in the cell surface. Its activity is regulated as follows. The C1Q subcomplex is inhibited by sulfated molecules, such as triterpenoid sulfates, heparan sulfate, or chondroitin sulfates. Core component of the complement C1 complex, a multiprotein complex that initiates the classical pathway of the complement system, a cascade of proteins that leads to phagocytosis and breakdown of pathogens and signaling that strengthens the adaptive immune system. The classical complement pathway is initiated by the C1Q subcomplex of the C1 complex, which specifically binds IgG or IgM immunoglobulins complexed with antigens, forming antigen-antibody complexes on the surface of pathogens: C1QA, together with C1QB and C1QC, specifically recognizes and binds the Fc regions of IgG or IgM via its C1q domain. Immunoglobulin-binding activates the proenzyme C1R, which cleaves C1S, initiating the proteolytic cascade of the complement system. The C1Q subcomplex is activated by a hexamer of IgG complexed with antigens, while it is activated by a pentameric IgM. The C1Q subcomplex also recognizes and binds phosphatidylserine exposed on the surface of cells undergoing programmed cell death, possibly promoting activation of the complement system. This is Complement C1q subcomponent subunit A from Rattus norvegicus (Rat).